Reading from the N-terminus, the 520-residue chain is Ubiquitin carboxyl-terminal hydrolase MINDY-1 (520 aa).

The interval 1 to 155 is disordered; sequence MADSCADTVD…ENEGAVAGAM (155 aa). Positions 26–37 are enriched in basic and acidic residues; it reads KNEDLEQTKPQK. A compositionally biased stretch (polar residues) spans 43–54; sequence TEESSACVSQIK. Over residues 77 to 86 the composition is skewed to low complexity; sequence ATSSASVTSK. 2 stretches are compositionally biased toward polar residues: residues 93–112 and 132–146; these read VINS…SFSM and SAKS…SVQE. Catalysis depends on cysteine 189, which acts as the Nucleophile. Catalysis depends on histidine 371, which acts as the Proton acceptor. 2 disordered regions span residues 422 to 441 and 467 to 520; these read SQKP…QQMQ and ELAR…CCIL. The interval 441–479 is ubiquitin-binding domain (UBD); the sequence is QIDQDYLVAMSLQQEQGEAPGPLSDLELARQLQQEEYQQ. Over residues 469 to 498 the composition is skewed to low complexity; that stretch reads ARQLQQEEYQQPQTQQQQQQQPSAGQMRGQ. Positions 511–520 are enriched in basic and acidic residues; it reads KKEETDCCIL.

This sequence belongs to the MINDY deubiquitinase family. FAM63 subfamily.

The catalysed reaction is Thiol-dependent hydrolysis of ester, thioester, amide, peptide and isopeptide bonds formed by the C-terminal Gly of ubiquitin (a 76-residue protein attached to proteins as an intracellular targeting signal).. Functionally, hydrolase that can specifically remove 'Lys-48'-linked conjugated ubiquitin from proteins. May play a regulatory role at the level of protein turnover. The polypeptide is Ubiquitin carboxyl-terminal hydrolase MINDY-1 (mindy1) (Danio rerio (Zebrafish)).